A 735-amino-acid polypeptide reads, in one-letter code: Protostadienol synthase helA (735 aa).

The PFTB 1 repeat unit spans residues 132–173 (KQEMCRYLLNVVNEDGGWGLFIQSPSTVFGTVMNYCMLRILG). Asp463 acts as the Proton donor in catalysis. PFTB repeat units lie at residues 490 to 531 (LQQA…YENV), 567 to 607 (LSRS…ACMG), and 616 to 663 (CQRA…AVIG).

Belongs to the terpene cyclase/mutase family.

The catalysed reaction is (S)-2,3-epoxysqualene = (17Z)-protosta-17(20),24-dien-3beta-ol. Its pathway is mycotoxin biosynthesis. Functionally, protostadienol synthase; part of the gene cluster that mediates the biosynthesis of helvolic acid, an antibacterial nortriterpenoid. Protostadienol synthase helA cyclizes (3S)-oxidosqualene to (17Z)-protosta-17(20),24-dien-3-beta-ol (protostadienol). The synthesis of protostadienol is followed by several steps of monooxygenation, dehydrogenation, and acyl transfer to yield the final helvolic acid. Following the cyclization to the tetracyclic protostadienol by helA, cytochrome P450 monooxygenases helB1-mediated and helB2-mediated oxidation at C-4 and C-16, acyltransferase helD2-dependent acetylation of 16-OH, oxidation of C-21 by cytochrome P450 monooxygenase helB4, and short chain dehydrogenase helC-dependent oxidative decarboxylation yield the fusidane skeleton. This intermediate is further modified in three additional steps mediated by the cytochrome P450 monooxygenase helB3, the acyltransferase helD1, and the 3-ketosteroid 1-dehydrogenase helE to give helvolic acid. Compared with the late stages in the biosynthesis of helvolic acid, enzymes involved in the early stage modifications act in a relatively strict order. The hydroxylation of C-16 by helB1 and subsequent acetylation by helD2 should occur before the helB3-mediated oxidation of C-21. C-4 demethylation in fusidane-type antibiotics proceeds in an unusual manner though it is also achieved by oxidative decarboxylation. The methyl group at C-4 beta position is oxidized by helB1 and subsequently removed by the short chain dehydrogenase helC. This Aspergillus fumigatus (strain ATCC MYA-4609 / CBS 101355 / FGSC A1100 / Af293) (Neosartorya fumigata) protein is Protostadienol synthase helA.